The primary structure comprises 130 residues: UPF0102 protein BT_1882 (130 aa).

Belongs to the UPF0102 family.

This Bartonella tribocorum (strain CIP 105476 / IBS 506) protein is UPF0102 protein BT_1882.